A 160-amino-acid chain; its full sequence is Ribosomal RNA large subunit methyltransferase H (160 aa).

S-adenosyl-L-methionine-binding positions include Leu76, Gly108, and 127 to 132 (LGKMTW).

The protein belongs to the RNA methyltransferase RlmH family. As to quaternary structure, homodimer.

Its subcellular location is the cytoplasm. It carries out the reaction pseudouridine(1915) in 23S rRNA + S-adenosyl-L-methionine = N(3)-methylpseudouridine(1915) in 23S rRNA + S-adenosyl-L-homocysteine + H(+). In terms of biological role, specifically methylates the pseudouridine at position 1915 (m3Psi1915) in 23S rRNA. The sequence is that of Ribosomal RNA large subunit methyltransferase H from Rhizobium meliloti (strain 1021) (Ensifer meliloti).